The chain runs to 250 residues: Protein REVERSION-TO-ETHYLENE SENSITIVITY1 (250 aa).

The next 3 membrane-spanning stretches (helical) occupy residues 55–75, 200–220, and 221–241; these read IVWT…HIGL, SVVR…VLVG, and WPFL…FIIA.

In terms of assembly, interacts with ETR1 through a region corresponding to its ethylene-binding domain. As to expression, strongly expressed in 1-4-day-old seedlings in the apical hook, cotyledons, root vascular tissue, root tip and root hairs, with little or no expression in the hypocotyl. In light-grown seedlings, expression could also be seen in the apex and young leaves, and disappeared from the cotyledons by 10 days. In mature plants, expressed in floral buds, the style of mature flowers, stems and the rachis.

It localises to the endoplasmic reticulum membrane. It is found in the golgi apparatus membrane. Its function is as follows. Acts at an early step in the ethylene signaling pathway. Positively regulates ETR1, leading to the negative regulation of ethylene responses. This is Protein REVERSION-TO-ETHYLENE SENSITIVITY1 (RTE1) from Arabidopsis thaliana (Mouse-ear cress).